Reading from the N-terminus, the 851-residue chain is Glycogen phosphorylase, liver form (851 aa).

At Ala-2 the chain carries N-acetylalanine. Ser-15 is modified (phosphoserine; by PHK; in form phosphorylase a). AMP is bound by residues 43 to 45 (DRN), Tyr-76, and Arg-310. Lys-364 carries the N6-succinyllysine modification. Lys-470 is modified (N6-acetyllysine). Residues Ser-524, Ser-561, and Ser-639 each carry the phosphoserine modification. Lys-681 carries the post-translational modification N6-(pyridoxal phosphate)lysine. Lys-796 carries the N6-acetyllysine modification.

Belongs to the glycogen phosphorylase family. Homodimer; enzymatically active. Interacts with PPP1R3B; recruits the phosphatase PP1 which dephosphorylates and inactivates PYGL/glycogen phosphorylase. The cofactor is pyridoxal 5'-phosphate. Acetylation, which is up-regulated by glucose and insulin and down-regulated by glucagon, inhibits the glycogen phosphorylase activity by promoting PPP1R3B-mediated recruitment of phosphatase PP1 and Ser-15 dephosphorylation. Post-translationally, phosphorylation at Ser-15 converts inactive phosphorylase b into active phosphorylase a. Dephosphorylation of Ser-15 by phosphatase PP1 inactivates the enzyme.

The protein resides in the cytoplasm. It localises to the cytosol. It carries out the reaction [(1-&gt;4)-alpha-D-glucosyl](n) + phosphate = [(1-&gt;4)-alpha-D-glucosyl](n-1) + alpha-D-glucose 1-phosphate. Allosterically regulated through the non-covalent binding of metabolites, being activated by AMP and inhibited by ATP, ADP, and glucose-6-phosphate. The activity is also controlled by post-translational modifications including phosphorylation and acetylation. Allosteric enzyme that catalyzes the rate-limiting step in glycogen catabolism, the phosphorolytic cleavage of glycogen to produce glucose-1-phosphate, and plays a central role in maintaining cellular and organismal glucose homeostasis. The sequence is that of Glycogen phosphorylase, liver form from Bos taurus (Bovine).